The primary structure comprises 709 residues: Ribosomal RNA large subunit methyltransferase K/L (709 aa).

In terms of domain architecture, THUMP spans 43 to 154; that stretch reads LAYRITLWTR…NGVITIAMNF (112 aa).

Belongs to the methyltransferase superfamily. RlmKL family.

It localises to the cytoplasm. It carries out the reaction guanosine(2445) in 23S rRNA + S-adenosyl-L-methionine = N(2)-methylguanosine(2445) in 23S rRNA + S-adenosyl-L-homocysteine + H(+). The enzyme catalyses guanosine(2069) in 23S rRNA + S-adenosyl-L-methionine = N(2)-methylguanosine(2069) in 23S rRNA + S-adenosyl-L-homocysteine + H(+). Its function is as follows. Specifically methylates the guanine in position 2445 (m2G2445) and the guanine in position 2069 (m7G2069) of 23S rRNA. This is Ribosomal RNA large subunit methyltransferase K/L from Shewanella sp. (strain W3-18-1).